The sequence spans 403 residues: N-isopropylammelide isopropyl amidohydrolase (403 aa).

His-60, His-62, and His-217 together coordinate Zn(2+). His-249 acts as the Proton donor/acceptor in catalysis. Asp-303 is a binding site for Zn(2+).

This sequence belongs to the metallo-dependent hydrolases superfamily. N-acyl-D-amino-acid deacylase family. As to quaternary structure, homotetramer. The cofactor is Zn(2+).

Its subcellular location is the cytoplasm. It catalyses the reaction N-isopropylammelide + H2O + H(+) = isopropylamine + cyanurate. It functions in the pathway xenobiotic degradation; atrazine degradation; cyanurate from atrazine: step 3/3. Its activity is regulated as follows. Inhibited by N-ethylammeline, N-hydroxyethylammeline, N-isopropylammeline, ammeline and 2-amino-4hydroxy-1,3,5-s-triazine. Its function is as follows. Transforms N-isopropylammelide to cyanuric acid and isopropylamine. This is N-isopropylammelide isopropyl amidohydrolase (atzC) from Pseudomonas sp. (strain ADP).